Consider the following 1229-residue polypeptide: Receptor-type adenylate cyclase GRESAG 4.3 (1229 aa).

The Cytoplasmic portion of the chain corresponds to 1–24 (MIARVCRLTKHSKPPHLPITLTTP). A helical membrane pass occupies residues 25 to 45 (TLFLVVLVLLQLHPICVLVNV). Residues 46–845 (DDGGGVTVKA…PNGNALTPAQ (800 aa)) lie on the Extracellular side of the membrane. 5 N-linked (GlcNAc...) asparagine glycosylation sites follow: Asn77, Asn84, Asn626, Asn693, and Asn768. A helical membrane pass occupies residues 846–866 (LAGVVGGSLFVVALAICLSVL). The Cytoplasmic segment spans residues 867–1229 (ACFTLRGTRD…SNDLSDMIRV (363 aa)). The Guanylate cyclase domain occupies 889–1043 (TLIFTDIESS…RTSNMAARTE (155 aa)). 2 residues coordinate Mg(2+): Asp894 and Asp937.

This sequence belongs to the adenylyl cyclase class-3 family. Mg(2+) is required as a cofactor.

It is found in the membrane. It carries out the reaction ATP = 3',5'-cyclic AMP + diphosphate. Could act as a receptor for an unknown ligand. In Trypanosoma brucei brucei, this protein is Receptor-type adenylate cyclase GRESAG 4.3 (GRESAG 4.3).